We begin with the raw amino-acid sequence, 440 residues long: Polyprenol-phosphate-mannose-dependent alpha-(1-2)-phosphatidylinositol mannoside mannosyltransferase (440 aa).

Helical transmembrane passes span 15–35, 87–107, 109–129, 144–161, 164–184, 193–213, 224–244, 281–301, 316–336, 360–380, and 395–415; these read LAPT…VLWV, LAAI…SSAI, ATTL…LDVW, AWLA…LEPI, NFEF…DCVP, LLLG…LYFL, TAAT…SDSV, PRFI…VWAA, APVL…PVSW, VWFT…PITL, and LAGG…GLVS. A disordered region spans residues 419–440; it reads THTGDAHETDEPLVPLARGEAG.

The protein belongs to the glycosyltransferase 87 family.

The protein localises to the cell membrane. It participates in phospholipid metabolism; phosphatidylinositol metabolism. Responsible for the addition of alpha-(1-2) mannose branches to the linear mannan core on the biosynthetic pathway to mature Lipoarabinomannan (LAM). The chain is Polyprenol-phosphate-mannose-dependent alpha-(1-2)-phosphatidylinositol mannoside mannosyltransferase from Mycolicibacterium smegmatis (strain ATCC 700084 / mc(2)155) (Mycobacterium smegmatis).